The following is a 79-amino-acid chain: Small ribosomal subunit protein uS17 (79 aa).

The protein belongs to the universal ribosomal protein uS17 family. As to quaternary structure, part of the 30S ribosomal subunit.

Its function is as follows. One of the primary rRNA binding proteins, it binds specifically to the 5'-end of 16S ribosomal RNA. The sequence is that of Small ribosomal subunit protein uS17 from Rhodospirillum rubrum (strain ATCC 11170 / ATH 1.1.1 / DSM 467 / LMG 4362 / NCIMB 8255 / S1).